A 63-amino-acid polypeptide reads, in one-letter code: 2-hydroxymuconate tautomerase (63 aa).

Residue P2 is the Proton acceptor; via imino nitrogen of the active site.

It belongs to the 4-oxalocrotonate tautomerase family. As to quaternary structure, homohexamer.

The catalysed reaction is (2Z,4E)-2-hydroxyhexa-2,4-dienedioate = (3E)-2-oxohex-3-enedioate. It functions in the pathway xenobiotic degradation; toluene degradation. Its pathway is xenobiotic degradation; xylene degradation. Functionally, catalyzes the ketonization of 2-hydroxymuconate stereoselectively to yield 2-oxo-3-hexenedioate. This is 2-hydroxymuconate tautomerase (xylH) from Pseudomonas putida (Arthrobacter siderocapsulatus).